A 459-amino-acid chain; its full sequence is MLKIYNSITRQKQEFKPITPGKIGMYVCGVTIYDLCHIGHGRTFVSFDMIVRYLRYAGYEVNFQRNITDVDDKIIKRANENNESCEALTERLIGEMHQDFDALNMLRPDFEPRATLHIAEIIDMVELLLARGHAYVASDGDVLFSVASYPDYGRLSGQNLDQLQAGARVEVDETKQNPMDFVLWKMSKPGEPTWESPWGPGRPGWHIECSAMNSKHLGLHFDIHGGGSDLQFPHHENEIAQSCCAHDTPYVNYWMHTGMVMVDREKMSKSLGNFFTIRDVLGHYDAETVRYFLLSGHYRSQLNYSEDNLKQARSALERLYTAIKDVDLTVAAAPAEEFVAKFKAAMDDDFNTPEAYSVLFDMVREINRLKLTDMAQASALAVTLKQLADVLGLLSQEPEAFFQGGGSDDEVAEIEALIVERNRARTEKDWAAADVARNRLNELGVELEDSPSGTTWRKK.

Cysteine 28 is a binding site for Zn(2+). The short motif at 30–40 (VTIYDLCHIGH) is the 'HIGH' region element. Zn(2+)-binding residues include cysteine 209, histidine 234, and glutamate 238. The 'KMSKS' region signature appears at 266–270 (KMSKS). Residue lysine 269 participates in ATP binding.

The protein belongs to the class-I aminoacyl-tRNA synthetase family. Monomer. Requires Zn(2+) as cofactor.

Its subcellular location is the cytoplasm. The enzyme catalyses tRNA(Cys) + L-cysteine + ATP = L-cysteinyl-tRNA(Cys) + AMP + diphosphate. This chain is Cysteine--tRNA ligase, found in Shewanella baltica (strain OS223).